The primary structure comprises 31 residues: Cyclotide vico-B (31 aa).

The cyclopeptide (Gly-Asn) cross-link spans 1–31 (GSIPCAESCVYIPCITGIAGCSCKNKVCYYN). 3 cysteine pairs are disulfide-bonded: C5–C21, C9–C23, and C14–C28.

This sequence belongs to the cyclotide family. Bracelet subfamily. Post-translationally, this is a cyclic peptide.

Its function is as follows. Probably participates in a plant defense mechanism. In Viola cotyledon (Violeta), this protein is Cyclotide vico-B.